The following is a 433-amino-acid chain: Glutamate-1-semialdehyde 2,1-aminomutase (433 aa).

K271 carries the post-translational modification N6-(pyridoxal phosphate)lysine.

Belongs to the class-III pyridoxal-phosphate-dependent aminotransferase family. HemL subfamily. In terms of assembly, homodimer. Requires pyridoxal 5'-phosphate as cofactor.

The protein localises to the cytoplasm. The enzyme catalyses (S)-4-amino-5-oxopentanoate = 5-aminolevulinate. It participates in porphyrin-containing compound metabolism; protoporphyrin-IX biosynthesis; 5-aminolevulinate from L-glutamyl-tRNA(Glu): step 2/2. Its pathway is porphyrin-containing compound metabolism; chlorophyll biosynthesis. The sequence is that of Glutamate-1-semialdehyde 2,1-aminomutase from Prochlorococcus marinus (strain MIT 9215).